We begin with the raw amino-acid sequence, 516 residues long: MEPAVSLAVCALLFLLWVRLKGLEFVLIHQRWVFVCLFLLPLSLIFDIYYYVRAWVVFKLSSAPRLHEQRVRDIQKQVREWKEQGSKTFMCTGRPGWLTVSLRVGKYKKTHKNIMINLMDILEVDTKKQIVRVEPLVTMGQVTALLTSIGWTLPVLPELDDLTVGGLIMGTGIESSSHKYGLFQHICTAYELVLADGSFVRCTPSENSDLFYAVPWSCGTLGFLVAAEIRIIPAKKYVKLRFEPVRGLEAICAKFTHESQRQENHFVEGLLYSLDEAVIMTGVMTDEAEPSKLNSIGNYYKPWFFKHVENYLKTNREGLEYIPLRHYYHRHTRSIFWELQDIIPFGNNPIFRYLFGWMVPPKISLLKLTQGETLRKLYEQHHVVQDMLVPMKCLQQALHTFQNDIHVYPIWLCPFILPSQPGLVHPKGNEAELYIDIGAYGEPRVKHFEARSCMRQLEKFVRSVHGFQMLYADCYMNREEFWEMFDGSLYHKLREKLGCQDAFPEVYDKICKAARH.

The N-terminal stretch at 1 to 22 (MEPAVSLAVCALLFLLWVRLKG) is a signal peptide. The Lumenal segment spans residues 23–31 (LEFVLIHQR). A helical transmembrane segment spans residues 32–52 (WVFVCLFLLPLSLIFDIYYYV). The Cytoplasmic portion of the chain corresponds to 53–516 (RAWVVFKLSS…YDKICKAARH (464 aa)). The FAD-binding PCMH-type domain maps to 58–234 (FKLSSAPRLH…VAAEIRIIPA (177 aa)). 163–175 (TVGGLIMGTGIES) provides a ligand contact to FAD.

The protein belongs to the FAD-binding oxidoreductase/transferase type 4 family. Interacts with DHCR7; this interaction regulates DHCR7 activity. It depends on FAD as a cofactor. In terms of tissue distribution, highly expressed in brain and adrenal gland with moderate expression in liver, lung, spleen, prostate and spinal cord. Low expression in heart, uterus and prostate. Undetectable in blood cells. In the brain, strongly expressed in cortical regions, substantia nigra, caudate nucleus, hippocampus, medulla oblongata and pons. In brains affected by Alzheimer disease, expression in the inferior temporal lobe is substantially lower than in the frontal cortex.

The protein localises to the endoplasmic reticulum membrane. Its subcellular location is the golgi apparatus membrane. It catalyses the reaction cholesterol + NADP(+) = desmosterol + NADPH + H(+). The enzyme catalyses lanosterol + NADPH + H(+) = 24,25-dihydrolanosterol + NADP(+). It carries out the reaction 5alpha-cholest-8-en-3beta-ol + NADP(+) = zymosterol + NADPH + H(+). It participates in steroid biosynthesis; cholesterol biosynthesis. Its function is as follows. Catalyzes the reduction of the delta-24 double bond of sterol intermediates during cholesterol biosynthesis. In addition to its cholesterol-synthesizing activity, can protect cells from oxidative stress by reducing caspase 3 activity during apoptosis induced by oxidative stress. Also protects against amyloid-beta peptide-induced apoptosis. This is Delta(24)-sterol reductase (DHCR24) from Homo sapiens (Human).